Reading from the N-terminus, the 335-residue chain is Methionine aminopeptidase 1D, mitochondrial (335 aa).

Residues 1–19 constitute a mitochondrion transit peptide; the sequence is MAAPSGVHLLVRRGSHRIF. H161 contributes to the substrate binding site. A divalent metal cation is bound by residues D178, D189, and H252. H259 contributes to the substrate binding site. A divalent metal cation-binding residues include E284 and E315.

This sequence belongs to the peptidase M24A family. Methionine aminopeptidase type 1 subfamily. Co(2+) serves as cofactor. It depends on Zn(2+) as a cofactor. The cofactor is Mn(2+). Fe(2+) is required as a cofactor. As to expression, overexpressed in colon cancer cell lines and colon tumors as compared to normal tissues (at protein level).

The protein localises to the mitochondrion. It carries out the reaction Release of N-terminal amino acids, preferentially methionine, from peptides and arylamides.. Functionally, removes the N-terminal methionine from nascent proteins. The N-terminal methionine is often cleaved when the second residue in the primary sequence is small and uncharged (Met-Ala-, Cys, Gly, Pro, Ser, Thr, or Val). Requires deformylation of the N(alpha)-formylated initiator methionine before it can be hydrolyzed. May play a role in colon tumorigenesis. The polypeptide is Methionine aminopeptidase 1D, mitochondrial (METAP1D) (Homo sapiens (Human)).